Reading from the N-terminus, the 190-residue chain is Ribosome maturation factor RimM (190 aa).

One can recognise a PRC barrel domain in the interval 102-190 (EDEYYWIDLV…RIDSDWPLED (89 aa)).

Belongs to the RimM family. As to quaternary structure, binds ribosomal protein uS19.

It localises to the cytoplasm. In terms of biological role, an accessory protein needed during the final step in the assembly of 30S ribosomal subunit, possibly for assembly of the head region. Essential for efficient processing of 16S rRNA. May be needed both before and after RbfA during the maturation of 16S rRNA. It has affinity for free ribosomal 30S subunits but not for 70S ribosomes. The protein is Ribosome maturation factor RimM of Bordetella avium (strain 197N).